The primary structure comprises 551 residues: Nicotianamine aminotransferase B (551 aa).

The tract at residues 24 to 127 (KSNGHGVAAA…GHAAAAAEEE (104 aa)) is disordered. Over residues 86–96 (GHRESNGHAEA) the composition is skewed to basic and acidic residues. Residues 111–123 (AANGESNGHAAAA) show a composition bias toward low complexity. Lys379 carries the N6-(pyridoxal phosphate)lysine modification.

It belongs to the class-I pyridoxal-phosphate-dependent aminotransferase family. Pyridoxal 5'-phosphate is required as a cofactor. In terms of tissue distribution, expressed in roots, but not in leaves.

The catalysed reaction is nicotianamine + 2-oxoglutarate = 3''-deamino-3''-oxonicotianamine + L-glutamate. Involved in biosynthesis of mugineic acid family phytosiderophores. The polypeptide is Nicotianamine aminotransferase B (Hordeum vulgare (Barley)).